Consider the following 360-residue polypeptide: Photosystem II protein D1 1 (360 aa).

Residues 2 to 31 (TTTLQRRESANLWERFCNWVTSTDNRLYVG) are Cytoplasmic-facing. Residues 32–53 (WFGVIMIPTLLAATICFVIAFI) traverse the membrane as a helical segment. Residues 54–110 (AAPPVDIDGIREPVSGSLLYGNNIITGAVVPSSNAIGLHFYPIWEAASLDEWLYNGG) lie on the Lumenal side of the membrane. A helical transmembrane segment spans residues 111–132 (PYQLIIFHFLLGASCYMGRQWE). Histidine 118 is a chlorophyll a binding site. Tyrosine 126 and glutamine 130 together coordinate pheophytin a. Residues 133–142 (LSYRLGMRPW) are Cytoplasmic-facing. A helical membrane pass occupies residues 143 to 163 (ICVAYSAPLASAFAVFLIYPI). Tyrosine 147 is a binding site for pheophytin a. The Lumenal portion of the chain corresponds to 164-191 (GQGSFSDGMPLGISGTFNFMIVFQAEHN). Residues aspartate 170 and glutamate 189 each contribute to the [CaMn4O5] cluster site. A helical transmembrane segment spans residues 192 to 217 (ILMHPFHQLGVAGVFGGALFCAMHGS). Histidine 198 contributes to the chlorophyll a binding site. A quinone is bound by residues histidine 215 and 264-265 (SF). Histidine 215 contacts Fe cation. The Cytoplasmic portion of the chain corresponds to 218-272 (LVTSSLIRETTETESANYGYKFGQEEETYNIVAAHGYFGRLIFQYASFNNSRSLH). Position 272 (histidine 272) interacts with Fe cation. Residues 273–295 (FFLAAWPVVGVWFTALGISTMAF) form a helical membrane-spanning segment. Over 296–344 (NLNGFNFNHSVIDAKGNVINTWADIINRANLGMEVMHERNAHNFPLDLA) the chain is Lumenal. Residues histidine 332, glutamate 333, aspartate 342, and alanine 344 each contribute to the [CaMn4O5] cluster site. The propeptide occupies 345–360 (SAESAPVAMIAPSING).

The protein belongs to the reaction center PufL/M/PsbA/D family. In terms of assembly, PSII is composed of 1 copy each of membrane proteins PsbA, PsbB, PsbC, PsbD, PsbE, PsbF, PsbH, PsbI, PsbJ, PsbK, PsbL, PsbM, PsbT, PsbX, PsbY, PsbZ, Psb30/Ycf12, peripheral proteins PsbO, CyanoQ (PsbQ), PsbU, PsbV and a large number of cofactors. It forms dimeric complexes. Precursor protein interacts with Ycf48. Part of a photosystem II (PSII) assembly intermediate complex PSII-I; crystallized from a strain deleted of psbJ, it forms monomeric PSII before addition of the oxygen evolving complex. PSII-I includes 3 assembly factors not found in mature PSII (Psb27, Psb28 and Psb34). In PSII-I the C-terminus of D1 (this subunit) is already processed but not yet found at its final position. The D1/D2 heterodimer binds P680, chlorophylls that are the primary electron donor of PSII, and subsequent electron acceptors. It shares a non-heme iron and each subunit binds pheophytin, quinone, additional chlorophylls, carotenoids and lipids. D1 provides most of the ligands for the Mn4-Ca-O5 cluster of the oxygen-evolving complex (OEC). There is also a Cl(-1) ion associated with D1 and D2, which is required for oxygen evolution. PSII binds additional chlorophylls, carotenoids and specific lipids. serves as cofactor. C-terminally processed by CtpA; processing is essential to allow assembly of the oxygen-evolving complex and thus photosynthetic growth. Post-translationally, tyr-161 forms a radical intermediate that is referred to as redox-active TyrZ, YZ or Y-Z.

Its subcellular location is the cellular thylakoid membrane. It catalyses the reaction 2 a plastoquinone + 4 hnu + 2 H2O = 2 a plastoquinol + O2. Functionally, photosystem II (PSII) is a light-driven water:plastoquinone oxidoreductase that uses light energy to abstract electrons from H(2)O, generating O(2) and a proton gradient subsequently used for ATP formation. It consists of a core antenna complex that captures photons, and an electron transfer chain that converts photonic excitation into a charge separation. The D1/D2 (PsbA/PsbD) reaction center heterodimer binds P680, the primary electron donor of PSII as well as several subsequent electron acceptors. The protein is Photosystem II protein D1 1 of Thermosynechococcus vestitus (strain NIES-2133 / IAM M-273 / BP-1).